A 165-amino-acid chain; its full sequence is RNA pyrophosphohydrolase (165 aa).

Positions 13–154 (PYRQGVGIML…KRPVYEQVVA (142 aa)) constitute a Nudix hydrolase domain. The short motif at 46 to 67 (GGIDAGEDPETAAWREMEEEIG) is the Nudix box element.

The protein belongs to the Nudix hydrolase family. RppH subfamily. The cofactor is a divalent metal cation.

Its function is as follows. Accelerates the degradation of transcripts by removing pyrophosphate from the 5'-end of triphosphorylated RNA, leading to a more labile monophosphorylated state that can stimulate subsequent ribonuclease cleavage. This is RNA pyrophosphohydrolase from Rhodospirillum rubrum (strain ATCC 11170 / ATH 1.1.1 / DSM 467 / LMG 4362 / NCIMB 8255 / S1).